The sequence spans 227 residues: Cytochrome c oxidase subunit 2 (227 aa).

Residues 1–14 lie on the Mitochondrial intermembrane side of the membrane; it reads MAYPFQLGLQDATS. The helical transmembrane segment at 15–45 threads the bilayer; it reads PIMEELLHFHDHTLMIVFLISSLVLYIITLM. The Mitochondrial matrix portion of the chain corresponds to 46 to 59; the sequence is LTTKLTHTSTMDAQ. A helical membrane pass occupies residues 60 to 87; sequence EVETVWTILPAIILVLIALPSLRILYMM. At 88–227 the chain is on the mitochondrial intermembrane side; it reads DEINNPSLTV…YFETWSALMV (140 aa). Residues H161, C196, E198, C200, H204, and M207 each contribute to the Cu cation site. Residue E198 participates in Mg(2+) binding. Position 218 is a phosphotyrosine (Y218).

This sequence belongs to the cytochrome c oxidase subunit 2 family. As to quaternary structure, component of the cytochrome c oxidase (complex IV, CIV), a multisubunit enzyme composed of 14 subunits. The complex is composed of a catalytic core of 3 subunits MT-CO1, MT-CO2 and MT-CO3, encoded in the mitochondrial DNA, and 11 supernumerary subunits COX4I, COX5A, COX5B, COX6A, COX6B, COX6C, COX7A, COX7B, COX7C, COX8 and NDUFA4, which are encoded in the nuclear genome. The complex exists as a monomer or a dimer and forms supercomplexes (SCs) in the inner mitochondrial membrane with NADH-ubiquinone oxidoreductase (complex I, CI) and ubiquinol-cytochrome c oxidoreductase (cytochrome b-c1 complex, complex III, CIII), resulting in different assemblies (supercomplex SCI(1)III(2)IV(1) and megacomplex MCI(2)III(2)IV(2)). Found in a complex with TMEM177, COA6, COX18, COX20, SCO1 and SCO2. Interacts with TMEM177 in a COX20-dependent manner. Interacts with COX20. Interacts with COX16. Requires Cu cation as cofactor.

The protein localises to the mitochondrion inner membrane. The enzyme catalyses 4 Fe(II)-[cytochrome c] + O2 + 8 H(+)(in) = 4 Fe(III)-[cytochrome c] + 2 H2O + 4 H(+)(out). Functionally, component of the cytochrome c oxidase, the last enzyme in the mitochondrial electron transport chain which drives oxidative phosphorylation. The respiratory chain contains 3 multisubunit complexes succinate dehydrogenase (complex II, CII), ubiquinol-cytochrome c oxidoreductase (cytochrome b-c1 complex, complex III, CIII) and cytochrome c oxidase (complex IV, CIV), that cooperate to transfer electrons derived from NADH and succinate to molecular oxygen, creating an electrochemical gradient over the inner membrane that drives transmembrane transport and the ATP synthase. Cytochrome c oxidase is the component of the respiratory chain that catalyzes the reduction of oxygen to water. Electrons originating from reduced cytochrome c in the intermembrane space (IMS) are transferred via the dinuclear copper A center (CU(A)) of subunit 2 and heme A of subunit 1 to the active site in subunit 1, a binuclear center (BNC) formed by heme A3 and copper B (CU(B)). The BNC reduces molecular oxygen to 2 water molecules using 4 electrons from cytochrome c in the IMS and 4 protons from the mitochondrial matrix. This is Cytochrome c oxidase subunit 2 (MT-CO2) from Vulpes zerda (Fennec fox).